The following is a 40-amino-acid chain: Photosystem II reaction center protein X (40 aa).

Over 1–11 (TITPSLKGFFI) the chain is Lumenal. A helical transmembrane segment spans residues 12–28 (GLLSGAVVLGLTFAVLI). The Cytoplasmic segment spans residues 29 to 40 (AISQIDKVQRSL).

This sequence belongs to the PsbX family. Type 1 subfamily. As to quaternary structure, PSII is composed of 1 copy each of membrane proteins PsbA, PsbB, PsbC, PsbD, PsbE, PsbF, PsbH, PsbI, PsbJ, PsbK, PsbL, PsbM, PsbT, PsbX, PsbY, PsbZ, Psb30/Ycf12, peripheral proteins PsbO, CyanoQ (PsbQ), PsbU, PsbV and a large number of cofactors. It forms dimeric complexes. PSII binds multiple chlorophylls, carotenoids and specific lipids. serves as cofactor.

The protein localises to the cellular thylakoid membrane. Involved in the binding and/or turnover of quinones at the Q(B) site of photosystem II (PSII). PSII is a light-driven water plastoquinone oxidoreductase, using light energy to abstract electrons from H(2)O, generating a proton gradient subsequently used for ATP formation. This is Photosystem II reaction center protein X from Thermostichus vulcanus (Synechococcus vulcanus).